The primary structure comprises 276 residues: Large ribosomal subunit protein uL2 (276 aa).

The disordered stretch occupies residues 208–276 (KAGRNRHRGI…KLIISRRKGK (69 aa)). Residues 230-240 (DHPHGGGEGKK) show a composition bias toward basic and acidic residues. The span at 255 to 276 (KGAKTRRKKASDKLIISRRKGK) shows a compositional bias: basic residues.

This sequence belongs to the universal ribosomal protein uL2 family. In terms of assembly, part of the 50S ribosomal subunit. Forms a bridge to the 30S subunit in the 70S ribosome.

Functionally, one of the primary rRNA binding proteins. Required for association of the 30S and 50S subunits to form the 70S ribosome, for tRNA binding and peptide bond formation. It has been suggested to have peptidyltransferase activity; this is somewhat controversial. Makes several contacts with the 16S rRNA in the 70S ribosome. The protein is Large ribosomal subunit protein uL2 of Campylobacter lari (strain RM2100 / D67 / ATCC BAA-1060).